The primary structure comprises 346 residues: Zinc finger CCCH domain-containing protein 28 (346 aa).

Residues 1–99 are disordered; that stretch reads MASAETPNPD…SPRYPDGKRR (99 aa). Residues 17–41 show a composition bias toward low complexity; sequence DAAAAADPAAAAPAAAATDPAAAGS. Basic residues predominate over residues 62–86; sequence RSSRSRSRSPRRGRSRSRSRSRSRG. C3H1-type zinc fingers lie at residues 103-131, 138-165, 181-209, 211-237, 282-308, and 314-340; these read DLNV…HPHP, DSKV…HPPP, KVKM…HHSP, EDCA…HVMA, NYGV…HPDL, and NTQV…HPPA.

This chain is Zinc finger CCCH domain-containing protein 28, found in Oryza sativa subsp. japonica (Rice).